Here is a 397-residue protein sequence, read N- to C-terminus: Phosphopentomutase (397 aa).

Positions 12, 289, 294, 330, 331, and 342 each coordinate Mn(2+).

The protein belongs to the phosphopentomutase family. It depends on Mn(2+) as a cofactor.

It localises to the cytoplasm. It carries out the reaction 2-deoxy-alpha-D-ribose 1-phosphate = 2-deoxy-D-ribose 5-phosphate. The catalysed reaction is alpha-D-ribose 1-phosphate = D-ribose 5-phosphate. Its pathway is carbohydrate degradation; 2-deoxy-D-ribose 1-phosphate degradation; D-glyceraldehyde 3-phosphate and acetaldehyde from 2-deoxy-alpha-D-ribose 1-phosphate: step 1/2. Its function is as follows. Isomerase that catalyzes the conversion of deoxy-ribose 1-phosphate (dRib-1-P) and ribose 1-phosphate (Rib-1-P) to deoxy-ribose 5-phosphate (dRib-5-P) and ribose 5-phosphate (Rib-5-P), respectively. This is Phosphopentomutase from Limosilactobacillus reuteri (strain DSM 20016) (Lactobacillus reuteri).